Here is a 298-residue protein sequence, read N- to C-terminus: Protoheme IX farnesyltransferase (298 aa).

Transmembrane regions (helical) follow at residues 24-44, 49-69, 100-120, 121-141, 149-169, 175-195, 220-240, 244-264, and 277-297; these read VIQL…PGLP, LQLA…AAAF, LLFS…WVNP, LTMW…TVIL, IVIG…AMAG, ALIL…ALAL, LMVL…YVYG, WLYL…AFYL, and FRFS…DHYL.

Belongs to the UbiA prenyltransferase family. Protoheme IX farnesyltransferase subfamily.

The protein resides in the cell inner membrane. The catalysed reaction is heme b + (2E,6E)-farnesyl diphosphate + H2O = Fe(II)-heme o + diphosphate. Its pathway is porphyrin-containing compound metabolism; heme O biosynthesis; heme O from protoheme: step 1/1. In terms of biological role, converts heme B (protoheme IX) to heme O by substitution of the vinyl group on carbon 2 of heme B porphyrin ring with a hydroxyethyl farnesyl side group. The chain is Protoheme IX farnesyltransferase from Albidiferax ferrireducens (strain ATCC BAA-621 / DSM 15236 / T118) (Rhodoferax ferrireducens).